We begin with the raw amino-acid sequence, 406 residues long: Putative F-box protein At5g38270 (406 aa).

Residues 20–67 (HDWSKLCPDILRSILESLSSTDFHRAKTVCSDWYSNWKTCVKPLCPWR) enclose the F-box domain.

This is Putative F-box protein At5g38270 from Arabidopsis thaliana (Mouse-ear cress).